We begin with the raw amino-acid sequence, 42 residues long: MQDVKTYLSTAPVLATLWFGFLAGLLIEINRSFSDALVLPFF.

A helical membrane pass occupies residues 7 to 27 (YLSTAPVLATLWFGFLAGLLI).

The protein belongs to the PsaJ family.

The protein localises to the plastid. Its subcellular location is the chloroplast thylakoid membrane. In terms of biological role, may help in the organization of the PsaE and PsaF subunits. The polypeptide is Photosystem I reaction center subunit IX (Anthoceros angustus (Hornwort)).